We begin with the raw amino-acid sequence, 430 residues long: MTTIAKILAREILDSRGNPTLEAEVTLADGSFGRAAVPSGASTGTKEAVELRDGDKTRYLGKGVRKAVENVNGTIAETLKDFDAADQQGLDRRLIDLDGTENKGRLGANALLGVSLAAAHAVAASRKQPLWQYLSTITESDVALPVPMMNIINGGAHADNNVDFQEFMVLPVGCSSFSEALRAGTEIFHSLKSVLKGHGLSTAVGDEGGFAPDFRSNVEALDTILEAIGKAGYTAGEDILLGLDVASSEFYDNGKYNLVGENKRLTSEQFVDFLADWVAQYPIISIEDGLAEDDWAGWKLLTDRVGKKVQLVGDDLFVTNPKIFKEGIDSGTANAILIKVNQIGTLTETLEAIAMAHAANYASIVSHRSGETEDTTIADIAVATTATQIKTGSLCRSDRVAKYNQLLRIEQALGSGARYAGRDAFVSLKR.

Glutamine 165 is a binding site for (2R)-2-phosphoglycerate. Catalysis depends on glutamate 207, which acts as the Proton donor. Positions 244, 287, and 314 each coordinate Mg(2+). Residues lysine 339, arginine 368, serine 369, and lysine 390 each coordinate (2R)-2-phosphoglycerate. The active-site Proton acceptor is lysine 339.

This sequence belongs to the enolase family. In terms of assembly, component of the RNA degradosome, a multiprotein complex involved in RNA processing and mRNA degradation. Mg(2+) is required as a cofactor.

The protein localises to the cytoplasm. It localises to the secreted. The protein resides in the cell surface. It catalyses the reaction (2R)-2-phosphoglycerate = phosphoenolpyruvate + H2O. It functions in the pathway carbohydrate degradation; glycolysis; pyruvate from D-glyceraldehyde 3-phosphate: step 4/5. In terms of biological role, catalyzes the reversible conversion of 2-phosphoglycerate (2-PG) into phosphoenolpyruvate (PEP). It is essential for the degradation of carbohydrates via glycolysis. The polypeptide is Enolase (Xanthomonas campestris pv. campestris (strain 8004)).